A 215-amino-acid chain; its full sequence is Uracil phosphoribosyltransferase (215 aa).

Residues R84, R109, and 136 to 144 (DPMLATGNT) contribute to the 5-phospho-alpha-D-ribose 1-diphosphate site. Uracil is bound by residues I198 and 203–205 (GDA). Residue D204 coordinates 5-phospho-alpha-D-ribose 1-diphosphate.

The protein belongs to the UPRTase family. It depends on Mg(2+) as a cofactor.

It catalyses the reaction UMP + diphosphate = 5-phospho-alpha-D-ribose 1-diphosphate + uracil. Its pathway is pyrimidine metabolism; UMP biosynthesis via salvage pathway; UMP from uracil: step 1/1. Allosterically activated by GTP. In terms of biological role, catalyzes the conversion of uracil and 5-phospho-alpha-D-ribose 1-diphosphate (PRPP) to UMP and diphosphate. The polypeptide is Uracil phosphoribosyltransferase (Methanothermobacter thermautotrophicus (strain ATCC 29096 / DSM 1053 / JCM 10044 / NBRC 100330 / Delta H) (Methanobacterium thermoautotrophicum)).